Consider the following 251-residue polypeptide: Aspartate/glutamate leucyltransferase (251 aa).

It belongs to the R-transferase family. Bpt subfamily.

Its subcellular location is the cytoplasm. The catalysed reaction is N-terminal L-glutamyl-[protein] + L-leucyl-tRNA(Leu) = N-terminal L-leucyl-L-glutamyl-[protein] + tRNA(Leu) + H(+). The enzyme catalyses N-terminal L-aspartyl-[protein] + L-leucyl-tRNA(Leu) = N-terminal L-leucyl-L-aspartyl-[protein] + tRNA(Leu) + H(+). Functionally, functions in the N-end rule pathway of protein degradation where it conjugates Leu from its aminoacyl-tRNA to the N-termini of proteins containing an N-terminal aspartate or glutamate. In Stenotrophomonas maltophilia (strain K279a), this protein is Aspartate/glutamate leucyltransferase.